Here is a 340-residue protein sequence, read N- to C-terminus: Armadillo repeat-containing protein 12 (340 aa).

The tract at residues 1 to 101 (MGKSIPQYLG…SITRCVYLLE (101 aa)) is interaction with TBC1D15. ARM repeat units follow at residues 100–139 (LEAE…AFSG), 179–218 (LPDY…YLAQ), and 278–318 (SLHE…SLQY).

As to quaternary structure, interacts with TBC1D15, TBC1D21, GK2 and IMMT. Interacts with VDAC2 and VDAC3 in a TBC1D21-dependent manner. Interacts (via ARM domains) with RBBP4. As to expression, expressed in testis. Highly expressed in the mid-piece of the elongated and late spermatids. Expressed at higher levels in neuroblastoma tissues and cell lines, than those of normal dorsal ganglia (at protein level). Expressed in breast cancer, colon cancer, hepatocellular carcinoma, lung cancer, pancreas cancer, prostate cancer, renal cancer and gastric cancer, but not in their normal counterparts.

The protein localises to the nucleus. Its subcellular location is the mitochondrion outer membrane. In terms of biological role, essential for male fertility and sperm mitochondrial sheath formation. Required for proper mitochondrial elongation and coiling along the flagellum during the formation of the mitochondrial sheath. Facilitates the growth and aggressiveness of neuroblastoma cells. Increases the EZH2 activity and H3K27me3 levels in a RBBP4-dependent manner, and facilitates the enrichment of polycomb repressive complex 2 and H3K27me3 on gene promoters, resulting in transcriptional repression of tumor suppressors affecting the proliferation, invasion, and metastasis of tumor cells. The polypeptide is Armadillo repeat-containing protein 12 (ARMC12) (Homo sapiens (Human)).